A 280-amino-acid chain; its full sequence is MNIIEVENVSFKYGNSKAYSLRDVNLNVKKGEFLGIIGPSGSGKSTFCLTLNGLIPHSINGEFEGNVFVDGLNTREHSVAELSTRVGLVFQNPDSQLFNMTVLEEVAFALENLGVEREEMWRRIRWALKLVKLWDKREEFPPNLSGGEKQRLAIASVLVMKPKVLVLDEPTSQLDPLGREEVLSLVRLLNKEEKITIILVEHNTDFLLEHADRIVVFDGGRVVMEGKPEEVFENVEFLERIGIRIPTRVKIGYELKKRGITRRAVLSYEEIIAEIAKQLR.

The 241-residue stretch at 4 to 244 (IEVENVSFKY…VEFLERIGIR (241 aa)) folds into the ABC transporter domain. Residue 38 to 45 (GPSGSGKS) participates in ATP binding.

Belongs to the ABC transporter superfamily.

It localises to the cell membrane. Functionally, probably part of an ABC transporter complex. Responsible for energy coupling to the transport system. In Pyrococcus abyssi (strain GE5 / Orsay), this protein is Putative ABC transporter ATP-binding protein PYRAB03730.